Here is a 730-residue protein sequence, read N- to C-terminus: Ribosomal RNA large subunit methyltransferase K/L (730 aa).

The region spanning 46 to 157 (TAYRLCLWSR…RGEAILSLDL (112 aa)) is the THUMP domain.

The protein belongs to the methyltransferase superfamily. RlmKL family.

It is found in the cytoplasm. It catalyses the reaction guanosine(2445) in 23S rRNA + S-adenosyl-L-methionine = N(2)-methylguanosine(2445) in 23S rRNA + S-adenosyl-L-homocysteine + H(+). It carries out the reaction guanosine(2069) in 23S rRNA + S-adenosyl-L-methionine = N(2)-methylguanosine(2069) in 23S rRNA + S-adenosyl-L-homocysteine + H(+). Functionally, specifically methylates the guanine in position 2445 (m2G2445) and the guanine in position 2069 (m7G2069) of 23S rRNA. In Pseudomonas putida (strain W619), this protein is Ribosomal RNA large subunit methyltransferase K/L.